The primary structure comprises 136 residues: UPF0213 protein ASA_0550 (136 aa).

The GIY-YIG domain occupies Gly17 to Arg92.

Belongs to the UPF0213 family.

The polypeptide is UPF0213 protein ASA_0550 (Aeromonas salmonicida (strain A449)).